Here is a 354-residue protein sequence, read N- to C-terminus: Glutaminyl-peptide cyclotransferase (354 aa).

A mitochondrion-targeting transit peptide spans 1–8 (MRLLLRNY). Cysteines 136 and 158 form a disulfide. Aspartate 153 provides a ligand contact to Zn(2+). Residue glutamate 190 is the Proton acceptor of the active site. Glutamate 191 contacts Zn(2+). Aspartate 228 acts as the Proton acceptor in catalysis. Position 318 (histidine 318) interacts with Zn(2+).

This sequence belongs to the glutaminyl-peptide cyclotransferase family.

It is found in the secreted. Its subcellular location is the mitochondrion. It carries out the reaction N-terminal L-glutaminyl-[peptide] = N-terminal 5-oxo-L-prolyl-[peptide] + NH4(+). Inhibited by imidazoles (imidazole, benzimidazole, 1-benzylimidazole, 1-methylimidazole, P150/03 and N-omega-acetylhistamine) and cysteamines (cysteamine and N-dimethylcysteamine). Inhibited by PDB50 1(3,4-dimethoxyphenyl)-3-(3-imidazol-1-ylpropyl)thiourea. In terms of biological role, acts as a glutaminyl-peptide cyclotransferase. Responsible for the biosynthesis of pyroglutamyl peptides. Might be more efficient in the conversion of tri and tetrapeptides in vitro. Might have a relative preference for substrates containing hydrophobic amino acids in vitro. In Drosophila melanogaster (Fruit fly), this protein is Glutaminyl-peptide cyclotransferase.